A 123-amino-acid chain; its full sequence is Large ribosomal subunit protein bL19c (123 aa).

It belongs to the bacterial ribosomal protein bL19 family.

It localises to the plastid. It is found in the chloroplast. The polypeptide is Large ribosomal subunit protein bL19c (Pyropia yezoensis (Susabi-nori)).